The following is a 61-amino-acid chain: Alpha-conotoxin CnIJ (61 aa).

A signal peptide spans 1–17; sequence MMFTVFLLVVLTTTVVS. The propeptide occupies 18–44; that stretch reads FPSDSASDGRDDEAKDERSDMYELKRN. Intrachain disulfides connect cysteine 47/cysteine 52 and cysteine 48/cysteine 59. A Cysteine amide modification is found at cysteine 59.

This sequence belongs to the conotoxin A superfamily. Expressed by the venom duct.

The protein localises to the secreted. In Conus consors (Singed cone), this protein is Alpha-conotoxin CnIJ.